Consider the following 697-residue polypeptide: Potassium-transporting ATPase ATP-binding subunit (697 aa).

The next 4 helical transmembrane spans lie at 55 to 75 (PIMF…FLPS), 79 to 99 (SIPG…VLFA), 245 to 265 (LTLI…YLGF), and 271 to 291 (VLVA…LSAI). Asp-324 serves as the catalytic 4-aspartylphosphate intermediate. ATP-binding positions include Asp-361, Glu-365, 393–400 (FKAETRMS), and Lys-412. Mg(2+) is bound by residues Asp-535 and Asp-539. Helical transmembrane passes span 605–625 (FAII…LNIM), 633–653 (AILS…PLAM), and 677–697 (GGVI…GLFI).

Belongs to the cation transport ATPase (P-type) (TC 3.A.3) family. Type IA subfamily. The system is composed of three essential subunits: KdpA, KdpB and KdpC.

The protein localises to the cell membrane. The catalysed reaction is K(+)(out) + ATP + H2O = K(+)(in) + ADP + phosphate + H(+). Part of the high-affinity ATP-driven potassium transport (or Kdp) system, which catalyzes the hydrolysis of ATP coupled with the electrogenic transport of potassium into the cytoplasm. This subunit is responsible for energy coupling to the transport system and for the release of the potassium ions to the cytoplasm. This chain is Potassium-transporting ATPase ATP-binding subunit, found in Bacillus cereus (strain G9842).